Consider the following 358-residue polypeptide: Src kinase-associated phosphoprotein 2 (358 aa).

Residues Ser-6 and Ser-9 each carry the phosphoserine modification. The segment at 60-108 is disordered; that stretch reads PQEFQDKGDAEEGDEYDDPFAGPPDTISLASERYDKDDDGPSDGNQFPP. The residue at position 75 (Tyr-75) is a Phosphotyrosine. Ser-87 and Ser-90 each carry phosphoserine. In terms of domain architecture, PH spans 116-219; it reads FVIKAGYLEK…WVQQLKFILQ (104 aa). Phosphotyrosine is present on residues Tyr-151 and Tyr-197. Ser-223 carries the post-translational modification Phosphoserine. The interval 227–293 is disordered; sequence PEDEDEKGDL…DSVQHPSGDK (67 aa). The span at 243–253 shows a compositional bias: low complexity; that stretch reads PVPVSSPQRSQ. Residues 255–270 are compositionally biased toward acidic residues; that stretch reads IDDEIYEELPEEEEDT. Tyr-260 carries the phosphotyrosine modification. Phosphoserine is present on residues Ser-272, Ser-282, and Ser-285. Residues 274–293 are compositionally biased toward basic and acidic residues; that stretch reads KMDEQGKGSRDSVQHPSGDK. One can recognise an SH3 domain in the interval 296-357; the sequence is DYANFYQGLW…PKAYLMEMYD (62 aa).

It belongs to the SKAP family. As to quaternary structure, interacts with FYB1, which is required for SKAP2 protein stability. Interacts with PTPNS1. Part of a complex consisting of SKAP2, FYB1 and PTPNS1. Part of a complex consisting of SKAP2, FYB1 and LILRB3. Interacts with LAT, GRB2, PTK2B, and PRAM1. May interact with actin. May interact with FYN, HCK and LYN. Interacts with FASLG.

It is found in the cytoplasm. May be involved in B-cell and macrophage adhesion processes. In B-cells, may act by coupling the B-cell receptor (BCR) to integrin activation. May play a role in src signaling pathway. In Rattus norvegicus (Rat), this protein is Src kinase-associated phosphoprotein 2 (Skap2).